We begin with the raw amino-acid sequence, 115 residues long: T cell receptor beta variable 7-6 (115 aa).

The N-terminal stretch at methionine 1–alanine 21 is a signal peptide. The Ig-like domain maps to glycine 22–leucine 115. An intrachain disulfide couples cysteine 42 to cysteine 111.

In terms of assembly, alpha-beta TR is a heterodimer composed of an alpha and beta chain; disulfide-linked. The alpha-beta TR is associated with the transmembrane signaling CD3 coreceptor proteins to form the TR-CD3 (TcR or TCR). The assembly of alpha-beta TR heterodimers with CD3 occurs in the endoplasmic reticulum where a single alpha-beta TR heterodimer associates with one CD3D-CD3E heterodimer, one CD3G-CD3E heterodimer and one CD247 homodimer forming a stable octameric structure. CD3D-CD3E and CD3G-CD3E heterodimers preferentially associate with TR alpha and TR beta chains, respectively. The association of the CD247 homodimer is the last step of TcR assembly in the endoplasmic reticulum and is required for transport to the cell surface.

The protein resides in the cell membrane. V region of the variable domain of T cell receptor (TR) beta chain that participates in the antigen recognition. Alpha-beta T cell receptors are antigen specific receptors which are essential to the immune response and are present on the cell surface of T lymphocytes. Recognize peptide-major histocompatibility (MH) (pMH) complexes that are displayed by antigen presenting cells (APC), a prerequisite for efficient T cell adaptive immunity against pathogens. Binding of alpha-beta TR to pMH complex initiates TR-CD3 clustering on the cell surface and intracellular activation of LCK that phosphorylates the ITAM motifs of CD3G, CD3D, CD3E and CD247 enabling the recruitment of ZAP70. In turn ZAP70 phosphorylates LAT, which recruits numerous signaling molecules to form the LAT signalosome. The LAT signalosome propagates signal branching to three major signaling pathways, the calcium, the mitogen-activated protein kinase (MAPK) kinase and the nuclear factor NF-kappa-B (NF-kB) pathways, leading to the mobilization of transcription factors that are critical for gene expression and essential for T cell growth and differentiation. The T cell repertoire is generated in the thymus, by V-(D)-J rearrangement. This repertoire is then shaped by intrathymic selection events to generate a peripheral T cell pool of self-MH restricted, non-autoaggressive T cells. Post-thymic interaction of alpha-beta TR with the pMH complexes shapes TR structural and functional avidity. This Homo sapiens (Human) protein is T cell receptor beta variable 7-6.